Here is a 365-residue protein sequence, read N- to C-terminus: NAC domain-containing protein 37 (365 aa).

One can recognise an NAC domain in the interval 9–158 (VPPGFRFHPT…GWVVCRAFKK (150 aa)). A DNA-binding region spans residues 109–164 (IGMRKTLVFYKGRAPNGKKSDWIMHEYRLESDENAPPQEEGWVVCRAFKKRATGQA).

The protein belongs to the plant vascular related NAC-domain protein family. Interacts with NAC030/VND7. In terms of tissue distribution, expressed in root metaxylem pole and in shoot pre-procambium and procambium. Present in root developing xylems. Specifically expressed in vessels but not in interfascicular fibers in stems.

It is found in the nucleus. Transcription activator that binds to the secondary wall NAC binding element (SNBE), 5'-(T/A)NN(C/T)(T/C/G)TNNNNNNNA(A/C)GN(A/C/T)(A/T)-3', in the promoter of target genes. Involved in xylem formation by promoting the expression of secondary wall-associated transcription factors and of genes involved in secondary wall biosynthesis and programmed cell death, genes driven by the secondary wall NAC binding element (SNBE). Triggers thickening of secondary walls. This is NAC domain-containing protein 37 from Arabidopsis thaliana (Mouse-ear cress).